We begin with the raw amino-acid sequence, 224 residues long: Thymidine kinase (224 aa).

ATP is bound by residues 19-26 (GPMFAGKT) and 93-96 (DEVQ). The active-site Proton acceptor is E94. Zn(2+) contacts are provided by C150, C153, C188, and H191.

It belongs to the thymidine kinase family. In terms of assembly, homotetramer.

It localises to the cytoplasm. It carries out the reaction thymidine + ATP = dTMP + ADP + H(+). This Mycoplasmoides gallisepticum (strain R(low / passage 15 / clone 2)) (Mycoplasma gallisepticum) protein is Thymidine kinase.